The chain runs to 302 residues: Protein translocase subunit SecF (302 aa).

Helical transmembrane passes span 12–32 (FFIY…FVKG), 138–158 (YAWY…TIRF), 166–186 (AILA…LFGI), 190–210 (LTAI…TIVV), 249–269 (FLVV…FAFG), and 272–292 (VGVI…VIGM).

This sequence belongs to the SecD/SecF family. SecF subfamily. Forms a complex with SecD. Part of the essential Sec protein translocation apparatus which comprises SecA, SecYEG and auxiliary proteins SecDF. Other proteins may also be involved.

It is found in the cell inner membrane. Functionally, part of the Sec protein translocase complex. Interacts with the SecYEG preprotein conducting channel. SecDF uses the proton motive force (PMF) to complete protein translocation after the ATP-dependent function of SecA. This is Protein translocase subunit SecF from Petrotoga mobilis (strain DSM 10674 / SJ95).